The chain runs to 563 residues: ATP-dependent RNA helicase DeaD (563 aa).

The Q motif motif lies at 13-41 (ATFADLQIHPRVLRAIGDVGYESPTAIQA). Residues 44 to 215 (IPALMAGSDV…AKYLHDPFEV (172 aa)) form the Helicase ATP-binding domain. Position 57–64 (57–64 (AQTGTGKT)) interacts with ATP. The DEAD box motif lies at 163 to 166 (DEAD). The 160-residue stretch at 226–385 (NISQSYIQVA…AQLPTVEDVN (160 aa)) folds into the Helicase C-terminal domain. 2 disordered regions span residues 441–470 (LMAPDPPLSRRNRDQRRDRPQRPKRRPDLT) and 543–563 (YRPPDAARRHNGGKPRRKHVG). Over residues 451–461 (RNRDQRRDRPQ) the composition is skewed to basic and acidic residues. A compositionally biased stretch (basic residues) spans 551–563 (RHNGGKPRRKHVG).

The protein belongs to the DEAD box helicase family. DeaD/CsdA subfamily.

It is found in the cytoplasm. The enzyme catalyses ATP + H2O = ADP + phosphate + H(+). Functionally, DEAD-box RNA helicase involved in various cellular processes at low temperature, including ribosome biogenesis, mRNA degradation and translation initiation. The sequence is that of ATP-dependent RNA helicase DeaD from Mycobacterium tuberculosis (strain CDC 1551 / Oshkosh).